Here is a 223-residue protein sequence, read N- to C-terminus: ATP-dependent dethiobiotin synthetase BioD (223 aa).

12-17 is an ATP binding site; that stretch reads EIGKTH. Thr-16 provides a ligand contact to Mg(2+). The active site involves Lys-37. Ser-41 provides a ligand contact to substrate. ATP contacts are provided by residues Asp-52 and 118–121; that span reads EGVG. The Mg(2+) site is built by Asp-52 and Glu-118.

This sequence belongs to the dethiobiotin synthetase family. Homodimer. Mg(2+) serves as cofactor.

Its subcellular location is the cytoplasm. It carries out the reaction (7R,8S)-7,8-diammoniononanoate + CO2 + ATP = (4R,5S)-dethiobiotin + ADP + phosphate + 3 H(+). It participates in cofactor biosynthesis; biotin biosynthesis; biotin from 7,8-diaminononanoate: step 1/2. In terms of biological role, catalyzes a mechanistically unusual reaction, the ATP-dependent insertion of CO2 between the N7 and N8 nitrogen atoms of 7,8-diaminopelargonic acid (DAPA, also called 7,8-diammoniononanoate) to form a ureido ring. This is ATP-dependent dethiobiotin synthetase BioD from Acidiphilium cryptum (strain JF-5).